The following is a 286-amino-acid chain: MSWIERILKKNTITKKTNIPEGIWVKCNNCNQMIYKIELEKNLEVCPKCNFHMRISARKRLEKFLDKNNILELGKNLEPKDILKFKDTKKYKDRLYIAQKLTKEKDAIIVMKGSLYKMPIVAAAFEFSFIGGSMSSVVGERFVFGVNESIKCNCPMVCFSASGGARVQEALISLMQMAKTSAALSKLRKKKIPYISVMTDPSMGGVSASIAMLGDINIAEPKALIGFAGPRVIEQTVREKLPDKFQKSEFLIQKGIIDLIIKRKNMRFSIGKLLAKITNKPEPKKE.

The CoA carboxyltransferase N-terminal domain occupies 23–286 (IWVKCNNCNQ…ITNKPEPKKE (264 aa)). The Zn(2+) site is built by cysteine 27, cysteine 30, cysteine 46, and cysteine 49. A C4-type zinc finger spans residues 27–49 (CNNCNQMIYKIELEKNLEVCPKC).

The protein belongs to the AccD/PCCB family. Acetyl-CoA carboxylase is a heterohexamer composed of biotin carboxyl carrier protein (AccB), biotin carboxylase (AccC) and two subunits each of ACCase subunit alpha (AccA) and ACCase subunit beta (AccD). Zn(2+) is required as a cofactor.

It localises to the cytoplasm. The catalysed reaction is N(6)-carboxybiotinyl-L-lysyl-[protein] + acetyl-CoA = N(6)-biotinyl-L-lysyl-[protein] + malonyl-CoA. It participates in lipid metabolism; malonyl-CoA biosynthesis; malonyl-CoA from acetyl-CoA: step 1/1. Its function is as follows. Component of the acetyl coenzyme A carboxylase (ACC) complex. Biotin carboxylase (BC) catalyzes the carboxylation of biotin on its carrier protein (BCCP) and then the CO(2) group is transferred by the transcarboxylase to acetyl-CoA to form malonyl-CoA. In Wigglesworthia glossinidia brevipalpis, this protein is Acetyl-coenzyme A carboxylase carboxyl transferase subunit beta.